Reading from the N-terminus, the 204-residue chain is UPF0637 protein lin1053 (204 aa).

Belongs to the UPF0637 family.

The sequence is that of UPF0637 protein lin1053 from Listeria innocua serovar 6a (strain ATCC BAA-680 / CLIP 11262).